The chain runs to 110 residues: Waprin-Thr1 (110 aa).

A signal peptide spans 1–20 (MYKKGTILVLAYLLIATAVC). The WAP domain occupies 22–68 (LSYKEGHCPLRNSVSKCIPRCVSDYQCSFNEKCCPNKCGSESCVQAS). 4 disulfide bridges follow: cysteine 29–cysteine 55, cysteine 38–cysteine 59, cysteine 42–cysteine 54, and cysteine 48–cysteine 64.

The protein belongs to the venom waprin family. Cys-rich waprin subfamily. In terms of tissue distribution, expressed by the venom gland.

It is found in the secreted. Antimicrobial peptides with activity against Gram-positive and Gram-negative bacteria as well as fungi. Recognizes carbohydrates in the microbial cell walls, and induces structural damage to them. Also inhibits microbial serine proteases subtilisin A and proteinase K, as well as human and porcine elastases. Carbohydrates that are recognized are LPS, mannan, peptidoglycan, and N-acetl-D-glucosamine. This is Waprin-Thr1 from Apis mellifera (Honeybee).